A 157-amino-acid polypeptide reads, in one-letter code: Probable succinate transporter subunit YjjB (157 aa).

Transmembrane regions (helical) follow at residues F6–M26, A55–I75, V87–I107, and F129–W149.

This sequence belongs to the ThrE exporter (TC 2.A.79) family. In terms of assembly, the transporter is composed of YjjB and YjjP.

Its subcellular location is the cell inner membrane. In terms of biological role, involved in succinate export with YjjP. Both proteins are required for export. This is Probable succinate transporter subunit YjjB from Salmonella arizonae (strain ATCC BAA-731 / CDC346-86 / RSK2980).